Reading from the N-terminus, the 315-residue chain is 4-hydroxy-3-methylbut-2-enyl diphosphate reductase (315 aa).

Cys-12 provides a ligand contact to [4Fe-4S] cluster. 2 residues coordinate (2E)-4-hydroxy-3-methylbut-2-enyl diphosphate: His-43 and His-81. 2 residues coordinate dimethylallyl diphosphate: His-43 and His-81. Isopentenyl diphosphate is bound by residues His-43 and His-81. Residue Cys-103 participates in [4Fe-4S] cluster binding. (2E)-4-hydroxy-3-methylbut-2-enyl diphosphate is bound at residue His-131. His-131 serves as a coordination point for dimethylallyl diphosphate. His-131 contacts isopentenyl diphosphate. Glu-133 serves as the catalytic Proton donor. A (2E)-4-hydroxy-3-methylbut-2-enyl diphosphate-binding site is contributed by Thr-170. Residue Cys-198 coordinates [4Fe-4S] cluster. Residues Ser-226, Asn-228, and Ser-271 each coordinate (2E)-4-hydroxy-3-methylbut-2-enyl diphosphate. The dimethylallyl diphosphate site is built by Ser-226, Asn-228, and Ser-271. Residues Ser-226, Asn-228, and Ser-271 each contribute to the isopentenyl diphosphate site.

Belongs to the IspH family. [4Fe-4S] cluster serves as cofactor.

The enzyme catalyses isopentenyl diphosphate + 2 oxidized [2Fe-2S]-[ferredoxin] + H2O = (2E)-4-hydroxy-3-methylbut-2-enyl diphosphate + 2 reduced [2Fe-2S]-[ferredoxin] + 2 H(+). It catalyses the reaction dimethylallyl diphosphate + 2 oxidized [2Fe-2S]-[ferredoxin] + H2O = (2E)-4-hydroxy-3-methylbut-2-enyl diphosphate + 2 reduced [2Fe-2S]-[ferredoxin] + 2 H(+). It participates in isoprenoid biosynthesis; dimethylallyl diphosphate biosynthesis; dimethylallyl diphosphate from (2E)-4-hydroxy-3-methylbutenyl diphosphate: step 1/1. The protein operates within isoprenoid biosynthesis; isopentenyl diphosphate biosynthesis via DXP pathway; isopentenyl diphosphate from 1-deoxy-D-xylulose 5-phosphate: step 6/6. In terms of biological role, catalyzes the conversion of 1-hydroxy-2-methyl-2-(E)-butenyl 4-diphosphate (HMBPP) into a mixture of isopentenyl diphosphate (IPP) and dimethylallyl diphosphate (DMAPP). Acts in the terminal step of the DOXP/MEP pathway for isoprenoid precursor biosynthesis. The polypeptide is 4-hydroxy-3-methylbut-2-enyl diphosphate reductase (Anoxybacillus flavithermus (strain DSM 21510 / WK1)).